A 618-amino-acid polypeptide reads, in one-letter code: Chaperone protein HtpG (618 aa).

The interval 1 to 340 (MATKHQFQTE…SEDLPLNVSR (340 aa)) is a; substrate-binding. A b region spans residues 341–545 (EILQQNKILA…KEDNNPMMAN (205 aa)). The tract at residues 546 to 618 (LMAQMGQKVP…ELNSLLLQSL (73 aa)) is c.

This sequence belongs to the heat shock protein 90 family. As to quaternary structure, homodimer.

Its subcellular location is the cytoplasm. Its function is as follows. Molecular chaperone. Has ATPase activity. The chain is Chaperone protein HtpG from Helicobacter hepaticus (strain ATCC 51449 / 3B1).